The following is an 864-amino-acid chain: MPPTALPPLRPPAQPYDSYSSSLSPSSPRFHPASAPHGRRAPSPSRLESLLDAPHAPARSPSRKIRSALSRHIRPHLTPRTLTPLLLWTLALWLVHHFLFPFSSPLAALSRPKAEQHFLSTTFPPPPQRLGDDRLDSVDPRWRAFHPLPPPEPPFPRLRPTRFLPPQCLEQWFADGETLCGAKEMGEEETLDATWLWVNGSDHRWRDSMAEWREKENVNSPERHFREQNELVHSMRSVLDALPGHLRTFHLILADYPFNYPEDLDLVPPSIIPDLEVAASKGGQGRRHPRELARAPASVSNLTERLTPESISPSLARHLQSEWRILQTPTWLDFSRRDPSDPSHPFHPYSVSKAGEMRQHYAEASYPTLRYASHWEVFHIPSVDRDGREELMGEREWRENEWKKKALPSFNSMAIESRIGWLPGLADAIIALNDDFFLLRPHAVSDFHSPLYGSVIRFEHSYNQQVKPDVEKNHINDPGEMGGLYHANALLSRRFPHRLRPYFAHVPKVITRGLHHEASLMFQEALTLSSTRKFREMKIGEGDVQMQWLLTSLRVERWREALLWTWVVANMGTLSGSHDRWDSDTRSAIKHLFGFTEDDDDVVKIEVHRGERWTLEPGRMQKVFHQAGWEAPKATEFLFSSMDGIMPPLLRSGEDPSQNDRCIIDLNRCFGVFWTRQEDVLSADMMKRLTFQYPECGDCMIMALVTASGTLGLNAFFPPKETTITAPELGPGDAYPKYLPPPHLPLTPTWHEADYSLSNILSTTALPGEQVDIRQYCMRLLSRYLYLDAKSVSHFHMMKSAEHAKRVFKMIQDNPKVSILGMNDDIESDYDEVKRLMNEWFEMRWPRKAVWERDWDPVKDRYHD.

The span at 1 to 14 (MPPTALPPLRPPAQ) shows a compositional bias: pro residues. Residues 1 to 47 (MPPTALPPLRPPAQPYDSYSSSLSPSSPRFHPASAPHGRRAPSPSRL) are disordered. Residues 1 to 81 (MPPTALPPLR…HIRPHLTPRT (81 aa)) lie on the Cytoplasmic side of the membrane. Residues 15–28 (PYDSYSSSLSPSSP) show a composition bias toward low complexity. The helical transmembrane segment at 82–102 (LTPLLLWTLALWLVHHFLFPF) threads the bilayer. The Lumenal portion of the chain corresponds to 103–864 (SSPLAALSRP…WDPVKDRYHD (762 aa)). N-linked (GlcNAc...) asparagine glycosylation is found at N199 and N301.

The protein belongs to the XPT1 family. Mn(2+) serves as cofactor.

It is found in the golgi apparatus membrane. It catalyses the reaction 3-alpha-D-mannopyranosyl-alpha-D-mannopyranose + UDP-alpha-D-xylose = 3-O-(6-O-alpha-D-xylosylphospho-alpha-D-mannopyranosyl)-alpha-D-mannopyranose + UMP + H(+). Its function is as follows. Xylosylphosphotransferase that is specific for UDP-xylose as a donor and mannose as an acceptor to form a xylose-alpha-1-phosphate-6-mannose linkage. Functions in the O-glycosylation of proteins en route through the secretory pathway. This chain is 3-O-alpha-D-mannopyranosyl-alpha-D-mannopyranose xylosylphosphotransferase (XPT1), found in Cryptococcus neoformans var. neoformans serotype D (strain B-3501A) (Filobasidiella neoformans).